The primary structure comprises 305 residues: Ornithine carbamoyltransferase (305 aa).

Residues 52–55 (STRT), Gln79, Arg103, and 130–133 (HPLQ) contribute to the carbamoyl phosphate site. Residues Asn162, Asp224, and 228 to 229 (SM) contribute to the L-ornithine site. Residues 264–265 (CL) and Arg292 each bind carbamoyl phosphate.

This sequence belongs to the aspartate/ornithine carbamoyltransferase superfamily. OTCase family.

It localises to the cytoplasm. The catalysed reaction is carbamoyl phosphate + L-ornithine = L-citrulline + phosphate + H(+). It functions in the pathway amino-acid biosynthesis; L-arginine biosynthesis; L-arginine from L-ornithine and carbamoyl phosphate: step 1/3. Its function is as follows. Reversibly catalyzes the transfer of the carbamoyl group from carbamoyl phosphate (CP) to the N(epsilon) atom of ornithine (ORN) to produce L-citrulline. The protein is Ornithine carbamoyltransferase of Pyrobaculum aerophilum (strain ATCC 51768 / DSM 7523 / JCM 9630 / CIP 104966 / NBRC 100827 / IM2).